Here is a 282-residue protein sequence, read N- to C-terminus: ATP synthase subunit a (282 aa).

The next 5 membrane-spanning stretches (helical) occupy residues 45 to 65 (AIHVDTMAISIALGFLFLWLF), 106 to 126 (IAPLALTIFVWVFLMNFMDLI), 160 to 179 (INATLGMSLSVFVLIVFYSI), 232 to 252 (LIFILIAILPWGVQWALSVPW), and 253 to 273 (AIFHILIIVLQAFIFMMLTIV).

It belongs to the ATPase A chain family. F-type ATPases have 2 components, CF(1) - the catalytic core - and CF(0) - the membrane proton channel. CF(1) has five subunits: alpha(3), beta(3), gamma(1), delta(1), epsilon(1). CF(0) has three main subunits: a(1), b(2) and c(9-12). The alpha and beta chains form an alternating ring which encloses part of the gamma chain. CF(1) is attached to CF(0) by a central stalk formed by the gamma and epsilon chains, while a peripheral stalk is formed by the delta and b chains.

It is found in the cell inner membrane. Functionally, key component of the proton channel; it plays a direct role in the translocation of protons across the membrane. The chain is ATP synthase subunit a from Marinomonas sp. (strain MWYL1).